The primary structure comprises 179 residues: MAELATIARPYAEALFRVAEGGDIAAWSTLVQELAQVARLPEVLSVASSPKVTRTQVAELLLAAVKSPVAAGAEAKNFVQMLVDNHRIALLPEIAEQFEALKNEREGAADAEIVSAFPLNGADLDSLVSGLERKFKRKLKPTVEVDSSLIGGVRVTVGDEVLDTSVRARLASMQAALTA.

It belongs to the ATPase delta chain family. As to quaternary structure, F-type ATPases have 2 components, F(1) - the catalytic core - and F(0) - the membrane proton channel. F(1) has five subunits: alpha(3), beta(3), gamma(1), delta(1), epsilon(1). F(0) has three main subunits: a(1), b(2) and c(10-14). The alpha and beta chains form an alternating ring which encloses part of the gamma chain. F(1) is attached to F(0) by a central stalk formed by the gamma and epsilon chains, while a peripheral stalk is formed by the delta and b chains.

It is found in the cell inner membrane. F(1)F(0) ATP synthase produces ATP from ADP in the presence of a proton or sodium gradient. F-type ATPases consist of two structural domains, F(1) containing the extramembraneous catalytic core and F(0) containing the membrane proton channel, linked together by a central stalk and a peripheral stalk. During catalysis, ATP synthesis in the catalytic domain of F(1) is coupled via a rotary mechanism of the central stalk subunits to proton translocation. Functionally, this protein is part of the stalk that links CF(0) to CF(1). It either transmits conformational changes from CF(0) to CF(1) or is implicated in proton conduction. The protein is ATP synthase subunit delta of Burkholderia orbicola (strain MC0-3).